The sequence spans 272 residues: D-aminoacyl-tRNA deacylase (272 aa).

This sequence belongs to the DtdA deacylase family. Monomer. It depends on Zn(2+) as a cofactor.

The enzyme catalyses a D-aminoacyl-tRNA + H2O = a tRNA + a D-alpha-amino acid + H(+). The catalysed reaction is glycyl-tRNA(Ala) + H2O = tRNA(Ala) + glycine + H(+). D-aminoacyl-tRNA deacylase with broad substrate specificity. By recycling D-aminoacyl-tRNA to D-amino acids and free tRNA molecules, this enzyme counteracts the toxicity associated with the formation of D-aminoacyl-tRNA entities in vivo. The chain is D-aminoacyl-tRNA deacylase from Thermococcus onnurineus (strain NA1).